The primary structure comprises 343 residues: Anthranilate phosphoribosyltransferase (343 aa).

5-phospho-alpha-D-ribose 1-diphosphate contacts are provided by residues Gly85, Gly88 to Asp89, Thr93, Asn95 to Thr98, Lys113 to Ser121, and Ala125. Gly85 is an anthranilate binding site. Ser97 is a binding site for Mg(2+). Arg171 is a binding site for anthranilate. Asp230 and Glu231 together coordinate Mg(2+).

It belongs to the anthranilate phosphoribosyltransferase family. In terms of assembly, homodimer. Mg(2+) serves as cofactor.

It catalyses the reaction N-(5-phospho-beta-D-ribosyl)anthranilate + diphosphate = 5-phospho-alpha-D-ribose 1-diphosphate + anthranilate. Its pathway is amino-acid biosynthesis; L-tryptophan biosynthesis; L-tryptophan from chorismate: step 2/5. Catalyzes the transfer of the phosphoribosyl group of 5-phosphorylribose-1-pyrophosphate (PRPP) to anthranilate to yield N-(5'-phosphoribosyl)-anthranilate (PRA). The chain is Anthranilate phosphoribosyltransferase from Aromatoleum aromaticum (strain DSM 19018 / LMG 30748 / EbN1) (Azoarcus sp. (strain EbN1)).